The following is a 445-amino-acid chain: Glucose-6-phosphate isomerase (445 aa).

The active-site Proton donor is the glutamate 284. Residues histidine 305 and lysine 419 contribute to the active site.

The protein belongs to the GPI family.

It localises to the cytoplasm. The enzyme catalyses alpha-D-glucose 6-phosphate = beta-D-fructose 6-phosphate. It participates in carbohydrate biosynthesis; gluconeogenesis. It functions in the pathway carbohydrate degradation; glycolysis; D-glyceraldehyde 3-phosphate and glycerone phosphate from D-glucose: step 2/4. Catalyzes the reversible isomerization of glucose-6-phosphate to fructose-6-phosphate. In Leptospira interrogans serogroup Icterohaemorrhagiae serovar Lai (strain 56601), this protein is Glucose-6-phosphate isomerase.